Consider the following 191-residue polypeptide: UPF0312 protein Shew185_3055 (191 aa).

Positions 1–22 (MKKQLLSALIGASLLAPMAASA) are cleaved as a signal peptide.

This sequence belongs to the UPF0312 family. Type 1 subfamily.

Its subcellular location is the periplasm. The protein is UPF0312 protein Shew185_3055 of Shewanella baltica (strain OS185).